Here is a 110-residue protein sequence, read N- to C-terminus: UPF0060 membrane protein Bpet0062 (110 aa).

The next 4 membrane-spanning stretches (helical) occupy residues 7-27 (LGLF…PYLW), 33-53 (SAWL…LLTL), 63-83 (AAYG…VDGV), and 86-106 (ATTD…IMAG).

It belongs to the UPF0060 family.

Its subcellular location is the cell inner membrane. The polypeptide is UPF0060 membrane protein Bpet0062 (Bordetella petrii (strain ATCC BAA-461 / DSM 12804 / CCUG 43448)).